Consider the following 80-residue polypeptide: Exodeoxyribonuclease 7 small subunit (80 aa).

Belongs to the XseB family. In terms of assembly, heterooligomer composed of large and small subunits.

It is found in the cytoplasm. The enzyme catalyses Exonucleolytic cleavage in either 5'- to 3'- or 3'- to 5'-direction to yield nucleoside 5'-phosphates.. Functionally, bidirectionally degrades single-stranded DNA into large acid-insoluble oligonucleotides, which are then degraded further into small acid-soluble oligonucleotides. The protein is Exodeoxyribonuclease 7 small subunit of Pseudomonas putida (strain W619).